Reading from the N-terminus, the 765-residue chain is Myotubularin-related protein 10-A (765 aa).

The Myotubularin phosphatase domain maps to 209–650 (FETYSDWDRE…THIKLWKLCY (442 aa)).

This sequence belongs to the protein-tyrosine phosphatase family. Non-receptor class myotubularin subfamily.

The polypeptide is Myotubularin-related protein 10-A (mtmr10-a) (Xenopus laevis (African clawed frog)).